Consider the following 74-residue polypeptide: Sec-independent protein translocase protein TatA (74 aa).

The helical transmembrane segment at 1 to 21 (MGGISIWNLVIIVLLVVLLFG) threads the bilayer. A disordered region spans residues 51–74 (AEFEKVEQKTAESTEQKAKEKEQA).

The protein belongs to the TatA/E family. In terms of assembly, the Tat system comprises two distinct complexes: a TatABC complex, containing multiple copies of TatA, TatB and TatC subunits, and a separate TatA complex, containing only TatA subunits. Substrates initially bind to the TatABC complex, which probably triggers association of the separate TatA complex to form the active translocon.

It is found in the cell inner membrane. In terms of biological role, part of the twin-arginine translocation (Tat) system that transports large folded proteins containing a characteristic twin-arginine motif in their signal peptide across membranes. TatA could form the protein-conducting channel of the Tat system. In Glaesserella parasuis serovar 5 (strain SH0165) (Haemophilus parasuis), this protein is Sec-independent protein translocase protein TatA.